A 593-amino-acid chain; its full sequence is Aspartate--tRNA(Asp/Asn) ligase (593 aa).

E182 provides a ligand contact to L-aspartate. The tract at residues 206 to 209 (QLFK) is aspartate. R228 is an L-aspartate binding site. ATP is bound by residues 228-230 (RDE) and Q237. H455 is an L-aspartate binding site. Residue E489 participates in ATP binding. Residue R496 coordinates L-aspartate. 541–544 (GLDR) lines the ATP pocket.

The protein belongs to the class-II aminoacyl-tRNA synthetase family. Type 1 subfamily. Homodimer.

Its subcellular location is the cytoplasm. It carries out the reaction tRNA(Asx) + L-aspartate + ATP = L-aspartyl-tRNA(Asx) + AMP + diphosphate. Aspartyl-tRNA synthetase with relaxed tRNA specificity since it is able to aspartylate not only its cognate tRNA(Asp) but also tRNA(Asn). Reaction proceeds in two steps: L-aspartate is first activated by ATP to form Asp-AMP and then transferred to the acceptor end of tRNA(Asp/Asn). The protein is Aspartate--tRNA(Asp/Asn) ligase of Geotalea uraniireducens (strain Rf4) (Geobacter uraniireducens).